The primary structure comprises 115 residues: NADH-ubiquinone oxidoreductase chain 3 (115 aa).

Transmembrane regions (helical) follow at residues 3 to 23 (LFIM…LNLL), 55 to 75 (FFMV…LLPL), and 87 to 107 (TITW…YEWL).

This sequence belongs to the complex I subunit 3 family.

Its subcellular location is the mitochondrion membrane. The enzyme catalyses a ubiquinone + NADH + 5 H(+)(in) = a ubiquinol + NAD(+) + 4 H(+)(out). In terms of biological role, core subunit of the mitochondrial membrane respiratory chain NADH dehydrogenase (Complex I) that is believed to belong to the minimal assembly required for catalysis. Complex I functions in the transfer of electrons from NADH to the respiratory chain. The immediate electron acceptor for the enzyme is believed to be ubiquinone. This is NADH-ubiquinone oxidoreductase chain 3 (MT-ND3) from Alligator mississippiensis (American alligator).